Here is a 352-residue protein sequence, read N- to C-terminus: Matrix protein (352 aa).

Residues 1–22 form a disordered region; sequence MEPDIKSISSESMEGVSDFSPS. A Nuclear export signal 1 motif is present at residues 106-115; that stretch reads LLEELCSLKV. The Nuclear localization signal motif lies at 244–258; the sequence is RRAGKYYSVDYCRRK. A Nuclear export signal 2 motif is present at residues 268 to 276; that stretch reads LGSIGGLSL.

Belongs to the morbillivirus/respirovirus/rubulavirus M protein family. Homomultimer. Interacts with host TRIM6; this interaction inhibits the IKBKE-dependent activation of the type I interferon signaling pathway. Interacts with host ANP32B; this interaction promotes M nuclear localization. In terms of processing, ubiquitinated; regulates matrix nuclear export.

Its subcellular location is the virion. It localises to the host cytoplasm. The protein resides in the host cell membrane. The protein localises to the host nucleus. In terms of biological role, plays a crucial role in virion assembly and budding. Forms a shell at the inner face of the plasma membrane. Transits through the host nucleus before gaining the functional ability to localize and bud from the plasma membrane. Mediates together with fusion protein the incorporation of the glycoprotein to the viral particles. Also participates in the inhibition of the host interferon type I antiviral response by interacting with and thereby inhibiting host TRIM6. This is Matrix protein (M) from Cynopterus brachyotis (Lesser short-nosed fruit bat).